Here is a 302-residue protein sequence, read N- to C-terminus: N-acetylmuramic acid 6-phosphate etherase (302 aa).

The SIS domain occupies alanine 55–lysine 218. Catalysis depends on glutamate 83, which acts as the Proton donor. The active site involves glutamate 114.

The protein belongs to the GCKR-like family. MurNAc-6-P etherase subfamily. As to quaternary structure, homodimer.

It carries out the reaction N-acetyl-D-muramate 6-phosphate + H2O = N-acetyl-D-glucosamine 6-phosphate + (R)-lactate. Its pathway is amino-sugar metabolism; N-acetylmuramate degradation. Functionally, specifically catalyzes the cleavage of the D-lactyl ether substituent of MurNAc 6-phosphate, producing GlcNAc 6-phosphate and D-lactate. The sequence is that of N-acetylmuramic acid 6-phosphate etherase from Levilactobacillus brevis (strain ATCC 367 / BCRC 12310 / CIP 105137 / JCM 1170 / LMG 11437 / NCIMB 947 / NCTC 947) (Lactobacillus brevis).